We begin with the raw amino-acid sequence, 751 residues long: MKFGKEYVAQMIPEWQQAYMDYTCLKTILREIKTSQKRSESQGVLKRKLSGRRNFSGLTKRYSRTFSSRDLENHDIMVHATTGDDGFEKYETTILKVSEVGRESELVFFKTLDLEFDKVNRFYRSNVEELVKEAVVLNRQMDALIAYRIKLDQPSTSWSCSETVSVDINALDSKEQKGKTLAEEMGIKVEENVSNGGDSTKETAPEALSVLDRIRLNKNQENPLSTIRNVLKLSNKEDIKFTKENLKKIEERLKNVFIEFYRKLRHLKNYSFLNTLAISKIMKKYDKIALRNAAKLYMEMVDKSYLTSSDEINKLMLRVESIFVEHFAGSNRSKGMNLLRPKVTKEKHRITFSTGFFVGCTVSLVIALGLFIHARNIMGAVGHKLYMETMFPLYSLFAFVVLHMIMYASNIYFWKRYRVNYPFIFGFKEGTELGYGHVLLLSFGLGTLALCAVLVNMDMEMDPNTNDYKTITELVPLFVVALVIAISVCPFNIFYRSSRFFFLMVLFRCIAAPLYKVNLPDFFLADQLTSQVQALRSLEFYICYYGWGDFKQRQSTCKSSDVYSTFYFIVAVIPYWSRFLQCVRRLIEEKDVSQGFNALKYLLTIVAVCLRTAFSINRGNDWKIAAWVFSGLATFYGTYWDIVYDWGLLHRPSKSWLREKLLVPHKSVYYVAMVVNVVLRLAWLQTVLDFNISFLHRETMVALIAILEIIRRGIWNFFRLENEHLNNVGKFRAFKSVPLPFNYDEEEDRDS.

The region spanning 1-299 (MKFGKEYVAQ…LRNAAKLYME (299 aa)) is the SPX domain. Over 1 to 351 (MKFGKEYVAQ…KVTKEKHRIT (351 aa)) the chain is Cytoplasmic. A helical membrane pass occupies residues 352–372 (FSTGFFVGCTVSLVIALGLFI). At 373–392 (HARNIMGAVGHKLYMETMFP) the chain is on the extracellular side. Residues 393–413 (LYSLFAFVVLHMIMYASNIYF) form a helical membrane-spanning segment. Topologically, residues 414–434 (WKRYRVNYPFIFGFKEGTELG) are cytoplasmic. The chain crosses the membrane as a helical span at residues 435–455 (YGHVLLLSFGLGTLALCAVLV). The Extracellular segment spans residues 456–473 (NMDMEMDPNTNDYKTITE). The chain crosses the membrane as a helical span at residues 474–494 (LVPLFVVALVIAISVCPFNIF). Residues 495-623 (YRSSRFFFLM…FSINRGNDWK (129 aa)) lie on the Cytoplasmic side of the membrane. Residues 558–751 (KSSDVYSTFY…NYDEEEDRDS (194 aa)) enclose the EXS domain. The helical transmembrane segment at 624-644 (IAAWVFSGLATFYGTYWDIVY) threads the bilayer. Residues 645-667 (DWGLLHRPSKSWLREKLLVPHKS) are Extracellular-facing. Residues 668–688 (VYYVAMVVNVVLRLAWLQTVL) form a helical membrane-spanning segment. The Cytoplasmic portion of the chain corresponds to 689–751 (DFNISFLHRE…NYDEEEDRDS (63 aa)).

The protein belongs to the SYG1 (TC 2.A.94) family. Expressed in root epidermis, leaf hydathodes, trichomes and petioles, stem vascular cylinder, receptacle, stigma apex and pollen grains.

The protein localises to the cell membrane. Its function is as follows. May transport inorganic phosphate (Pi). The chain is Phosphate transporter PHO1 homolog 8 (PHO1-H8) from Arabidopsis thaliana (Mouse-ear cress).